The chain runs to 236 residues: MDVKIFDNDTEAGKYAFDLIKQGMDNGAKVLGLATGSTPVTMYKAMVNSDVDFSNMTSINLDEYVGLAPDNDQSYRYFMQSNLFDKKPFKETFVPNGLAKGPEEETTRYNKVIADHPINIQVLGIGRNGHIGFNEPGSPFDAETRKVPLTQSTIDANARFFASEDDVPRYAYSMGIGSILKSKKILLLAFGENKADAVKKMIEGPVTNDVPASALQKHSDVVVILDKAAASKLSKK.

The active-site Proton acceptor; for enolization step is the Asp62. Asn128 (for ring-opening step) is an active-site residue. His130 (proton acceptor; for ring-opening step) is an active-site residue. The active-site For ring-opening step is the Glu135.

The protein belongs to the glucosamine/galactosamine-6-phosphate isomerase family. NagB subfamily.

The catalysed reaction is alpha-D-glucosamine 6-phosphate + H2O = beta-D-fructose 6-phosphate + NH4(+). The protein operates within amino-sugar metabolism; N-acetylneuraminate degradation; D-fructose 6-phosphate from N-acetylneuraminate: step 5/5. Its function is as follows. Catalyzes the reversible isomerization-deamination of glucosamine 6-phosphate (GlcN6P) to form fructose 6-phosphate (Fru6P) and ammonium ion. The sequence is that of Glucosamine-6-phosphate deaminase from Lacticaseibacillus paracasei (strain ATCC 334 / BCRC 17002 / CCUG 31169 / CIP 107868 / KCTC 3260 / NRRL B-441) (Lactobacillus paracasei).